The chain runs to 279 residues: Large ribosomal subunit protein uL2 (279 aa).

Disordered stretches follow at residues 31-61 (KSLL…HKRH) and 222-279 (GMAM…RNAK). Residues 49 to 61 (KTSRHRGGGHKRH) show a composition bias toward basic residues. Residues 232-242 (MGGGEGKSKSG) are compositionally biased toward gly residues. Residues 259–268 (LKTRNRKKAS) are compositionally biased toward basic residues.

This sequence belongs to the universal ribosomal protein uL2 family. As to quaternary structure, part of the 50S ribosomal subunit. Forms a bridge to the 30S subunit in the 70S ribosome.

In terms of biological role, one of the primary rRNA binding proteins. Required for association of the 30S and 50S subunits to form the 70S ribosome, for tRNA binding and peptide bond formation. It has been suggested to have peptidyltransferase activity; this is somewhat controversial. Makes several contacts with the 16S rRNA in the 70S ribosome. The chain is Large ribosomal subunit protein uL2 from Chlorobium chlorochromatii (strain CaD3).